The chain runs to 288 residues: Probable ketoamine kinase PM0587 (288 aa).

92–94 (EAL) contacts ATP.

This sequence belongs to the fructosamine kinase family.

Functionally, ketoamine kinase that phosphorylates ketoamines on the third carbon of the sugar moiety to generate ketoamine 3-phosphate. The chain is Probable ketoamine kinase PM0587 from Pasteurella multocida (strain Pm70).